We begin with the raw amino-acid sequence, 345 residues long: GTPase Obg (345 aa).

The Obg domain maps to Met1–Ile158. One can recognise an OBG-type G domain in the interval Ala159–Lys339. GTP-binding positions include Gly165 to Ser172, Phe190 to Thr194, Asp212 to Gly215, Ser280 to Asp283, and Ser320 to Leu322. Mg(2+) contacts are provided by Ser172 and Thr192.

Belongs to the TRAFAC class OBG-HflX-like GTPase superfamily. OBG GTPase family. Monomer. Requires Mg(2+) as cofactor.

Its subcellular location is the cytoplasm. An essential GTPase which binds GTP, GDP and possibly (p)ppGpp with moderate affinity, with high nucleotide exchange rates and a fairly low GTP hydrolysis rate. Plays a role in control of the cell cycle, stress response, ribosome biogenesis and in those bacteria that undergo differentiation, in morphogenesis control. The sequence is that of GTPase Obg from Campylobacter jejuni subsp. doylei (strain ATCC BAA-1458 / RM4099 / 269.97).